The following is a 972-amino-acid chain: Microtubule-associated protein 1S (972 aa).

The tract at residues 1–715 (MAAVMAAPEP…SESLPTLSDS (715 aa)) is necessary for the microtubule-organizing center localization. Positions 454–469 (LEVPSRANSQDSLASR) are enriched in polar residues. The interval 454–632 (LEVPSRANSQ…PHSTEVDESL (179 aa)) is disordered. Serine 462 bears the Phosphoserine mark. The span at 489–505 (VRREPALATRDQKKDTK) shows a compositional bias: basic and acidic residues. Composition is skewed to pro residues over residues 537-550 (APVP…PAPE) and 564-581 (PPAP…PPTA). Phosphoserine is present on residues serine 585, serine 590, and serine 592. The interval 600-972 (PDASPSATTP…EAFPACKVEF (373 aa)) is necessary for interaction with RASSF1. Residues 602–620 (ASPSATTPTLTTPSLPAEL) are compositionally biased toward low complexity. The segment at 644-879 (DAGLSLPLRL…GGGAGHLDQN (236 aa)) is necessary for association with microtubules. 2 positions are modified to phosphoserine: serine 659 and serine 683. Positions 671-854 (CEFSHRKPPP…SSGPSSRPAP (184 aa)) are disordered. Residues 702 to 721 (PTSVSESLPTLSDSDPVPVA) are compositionally biased toward low complexity. Serine 723 is subject to Phosphoserine. Over residues 737–748 (LPTPRVPPPLPD) the composition is skewed to pro residues. The segment covering 781-800 (ARPSSASAAPRAATVAAKTK) has biased composition (low complexity). The interval 874-972 (GHLDQNFFLR…EAFPACKVEF (99 aa)) is necessary for association with actin. The necessary for the mitochondrial aggregation and genome destruction stretch occupies residues 880-904 (FFLRVRALCYVISGQGQRQEEGLRG).

This sequence belongs to the MAP1A/MAP1B/MAP1S family. Heterodimer of a heavy and a light chain. Interacts with microtubules and actin. Both MAP1S heavy and light chains interact with microtubules. MAP1S light chain interacts with actin. Interacts with LRPPRC, RASSF1, microtubules and VCY2. Interacts (via C-terminus) with GAN (via Kelch domains). Interacts with WDR47 (via N-terminus of light chain). Interacts with ESR1. In terms of tissue distribution, expressed in cortex cerebellum, dorsal root ganglia, frontal cortex, hippocampus, hypothalamus, mesencephalon, medulla oblongata, occipital cortex, pons, spinal cord, striatum of the brain, neurons, heart, testis and skeletal muscle (at protein level).

The protein localises to the nucleus. Its subcellular location is the cytoplasm. It is found in the cytosol. The protein resides in the cytoskeleton. It localises to the spindle. In terms of biological role, microtubule-associated protein that mediates aggregation of mitochondria resulting in cell death and genomic destruction (MAGD). Plays a role in anchoring the microtubule organizing center to the centrosomes. Binds to DNA. Plays a role in apoptosis. Involved in the formation of microtubule bundles. In Rattus norvegicus (Rat), this protein is Microtubule-associated protein 1S (Map1s).